The following is a 255-amino-acid chain: MEKCEGIVIRQTSYRESDKIVRMYTREFGKIGVVARGAKKTKSRLAAVTQLFTNGYFTFFGGNGLGTLQQGEVIETFSSIQQDIFMTAYATYVCELLDKATEERQPNPYLYELTFQILRDIDEGYDPQILTQIYEMKMLPVLGLYPTMDKCAICGETTGHFDFSTSSNGIICHRCFEKDRYRMHLPENVVKLLRLFFIFQLDRLGNIDVKQETKDWLQKAIDTYYDEYSGLYLKSRKFIREMDKWENMLKKDSDD.

This sequence belongs to the RecO family.

In terms of biological role, involved in DNA repair and RecF pathway recombination. This is DNA repair protein RecO from Listeria monocytogenes serotype 4a (strain HCC23).